The chain runs to 59 residues: UPF0434 protein Noc_2677 (59 aa).

This sequence belongs to the UPF0434 family.

The sequence is that of UPF0434 protein Noc_2677 from Nitrosococcus oceani (strain ATCC 19707 / BCRC 17464 / JCM 30415 / NCIMB 11848 / C-107).